Reading from the N-terminus, the 160-residue chain is MTADVPNARLVDVELDESIGRSTPDVEHERAVAIFDLIEENSFHPVGDQKGGPYRLKLSLMESRLIFSITRENGDAVATHILSLTPLRRVVRDYFMICESYYQAIRSATPSKIEAIDMGRRGLHNEGSQTLQARLKGKIEVDFDTARRLFTLVCVLHWRG.

It belongs to the UPF0262 family.

The protein is UPF0262 protein BCAN_A0255 of Brucella canis (strain ATCC 23365 / NCTC 10854 / RM-666).